The primary structure comprises 623 residues: Sphingomyelinase C 2 (623 aa).

The N-terminal stretch at 1 to 25 (MINKITKPKLLIGYYLLLFSLIRCL) is a signal peptide. 2 stretches are compositionally biased toward low complexity: residues 51-61 (VNSVSINNDPA) and 67-80 (NPAS…NAVP). Residues 51–121 (VNSVSINNDP…DPNPANLASA (71 aa)) are disordered. Positions 89 to 102 (NPVNPASANSNQVN) are enriched in polar residues. Over residues 110–121 (PADPNPANLASA) the composition is skewed to low complexity.

It localises to the secreted. It carries out the reaction a sphingomyelin + H2O = phosphocholine + an N-acylsphing-4-enine + H(+). The sequence is that of Sphingomyelinase C 2 (sph2) from Leptospira interrogans serogroup Icterohaemorrhagiae serovar Lai (strain 56601).